A 98-amino-acid chain; its full sequence is Small ribosomal subunit protein bS20 (98 aa).

Basic residues predominate over residues 1–15; the sequence is MAPKKTTKKGGPKKR. A disordered region spans residues 1–21; sequence MAPKKTTKKGGPKKRPSAEKR.

Belongs to the bacterial ribosomal protein bS20 family.

Functionally, binds directly to 16S ribosomal RNA. This Chlamydia felis (strain Fe/C-56) (Chlamydophila felis) protein is Small ribosomal subunit protein bS20.